The chain runs to 400 residues: Probable protein phosphatase 2C 64 (400 aa).

One can recognise a PPM-type phosphatase domain in the interval D47 to F355. S75 carries the phosphoserine modification. Positions 86, 87, 287, and 346 each coordinate Mn(2+).

This sequence belongs to the PP2C family. As to quaternary structure, interacts with SAUR19. Requires Mg(2+) as cofactor. The cofactor is Mn(2+).

The enzyme catalyses O-phospho-L-seryl-[protein] + H2O = L-seryl-[protein] + phosphate. It carries out the reaction O-phospho-L-threonyl-[protein] + H2O = L-threonyl-[protein] + phosphate. In terms of biological role, dephosphorylates and represses plasma membrane H(+)-ATPases (PM H(+)-ATPases, e.g. AHA1 and AHA2), thus influencing negatively plant growth and fitness. This Arabidopsis thaliana (Mouse-ear cress) protein is Probable protein phosphatase 2C 64.